Reading from the N-terminus, the 226-residue chain is Teichuronic acid biosynthesis protein TuaF (226 aa).

2 helical membrane-spanning segments follow: residues 15–35 (NIIWIIAVPIILGAAGYILPS) and 202–222 (VLGVMIGLTIAFMFVVIPEFF).

The protein localises to the cell membrane. It participates in cell wall biogenesis; teichuronic acid biosynthesis. This is Teichuronic acid biosynthesis protein TuaF (tuaF) from Bacillus subtilis (strain 168).